The primary structure comprises 554 residues: Glutamine--tRNA ligase (554 aa).

The 'HIGH' region signature appears at 34–44 (PEPNGYLHIGH). ATP-binding positions include 35–37 (EPN) and 41–47 (HIGHAKS). L-glutamine-binding residues include aspartate 67 and tyrosine 212. ATP contacts are provided by residues threonine 231, 261–262 (RL), and 269–271 (MSK). Residues 268–272 (VMSKR) carry the 'KMSKS' region motif. The interaction with tRNA stretch occupies residues 317 to 324 (TKQDNTIE).

Belongs to the class-I aminoacyl-tRNA synthetase family. Monomer.

It localises to the cytoplasm. It carries out the reaction tRNA(Gln) + L-glutamine + ATP = L-glutaminyl-tRNA(Gln) + AMP + diphosphate. This chain is Glutamine--tRNA ligase, found in Escherichia coli O157:H7.